A 316-amino-acid polypeptide reads, in one-letter code: Succinoglycan biosynthesis protein ExoV (316 aa).

It functions in the pathway glycan metabolism; exopolysaccharide biosynthesis. The chain is Succinoglycan biosynthesis protein ExoV (exoV) from Rhizobium meliloti (strain 1021) (Ensifer meliloti).